The sequence spans 424 residues: Serine hydroxymethyltransferase (424 aa).

(6S)-5,6,7,8-tetrahydrofolate contacts are provided by residues Leu113 and 117–119 (GHL). An N6-(pyridoxal phosphate)lysine modification is found at Lys222. (6S)-5,6,7,8-tetrahydrofolate is bound at residue 361 to 363 (SPF).

The protein belongs to the SHMT family. As to quaternary structure, homodimer. Pyridoxal 5'-phosphate is required as a cofactor.

Its subcellular location is the cytoplasm. It catalyses the reaction (6R)-5,10-methylene-5,6,7,8-tetrahydrofolate + glycine + H2O = (6S)-5,6,7,8-tetrahydrofolate + L-serine. It functions in the pathway one-carbon metabolism; tetrahydrofolate interconversion. It participates in amino-acid biosynthesis; glycine biosynthesis; glycine from L-serine: step 1/1. Its function is as follows. Catalyzes the reversible interconversion of serine and glycine with tetrahydrofolate (THF) serving as the one-carbon carrier. This reaction serves as the major source of one-carbon groups required for the biosynthesis of purines, thymidylate, methionine, and other important biomolecules. Also exhibits THF-independent aldolase activity toward beta-hydroxyamino acids, producing glycine and aldehydes, via a retro-aldol mechanism. The chain is Serine hydroxymethyltransferase from Flavobacterium psychrophilum (strain ATCC 49511 / DSM 21280 / CIP 103535 / JIP02/86).